A 303-amino-acid polypeptide reads, in one-letter code: Glutamyl-Q tRNA(Asp) synthetase (303 aa).

Residues 9–13 (RFAPS) and Glu45 contribute to the L-glutamate site. A 'HIGH' region motif is present at residues 12–22 (PSPTGAMHLGN). Residues Cys100, Cys102, Tyr125, and Cys129 each coordinate Zn(2+). Positions 184 and 202 each coordinate L-glutamate. The 'KMSKS' region signature appears at 240–244 (RLAKR). ATP is bound at residue Lys243.

This sequence belongs to the class-I aminoacyl-tRNA synthetase family. GluQ subfamily. Requires Zn(2+) as cofactor.

In terms of biological role, catalyzes the tRNA-independent activation of glutamate in presence of ATP and the subsequent transfer of glutamate onto a tRNA(Asp). Glutamate is transferred on the 2-amino-5-(4,5-dihydroxy-2-cyclopenten-1-yl) moiety of the queuosine in the wobble position of the QUC anticodon. The polypeptide is Glutamyl-Q tRNA(Asp) synthetase (Deinococcus geothermalis (strain DSM 11300 / CIP 105573 / AG-3a)).